A 121-amino-acid chain; its full sequence is Centrocin 2 (121 aa).

The N-terminal stretch at 1–20 is a signal peptide; it reads MMIKIAVVLCAVMATSMVFA. Residues 21 to 50 constitute a propeptide that is removed on maturation; the sequence is NDVKEQELADLLDLLISEEVSSPDDAVAES. Residues tryptophan 51 and tryptophan 59 each carry the 6'-bromotryptophan modification. A disulfide bridge connects residues cysteine 77 and cysteine 112. The propeptide occupies 83 to 106; that stretch reads SPQEARAKVLEAFPEMKESDLDEE. Position 107 is a pyrrolidone carboxylic acid (glutamine 107). Histidine 119 carries the histidine amide modification.

In terms of assembly, heterodimer of a light and a heavy chain, probably disulfide-linked.

Functionally, has antimicrobial activity against Gram-negative bacteria, Gram-positive bacteria and against fungi with minimum inhibitory concentration (MIC) between 0.78 uM and 50 uM. Shows little hemolytic activity at concentrations up to 12.5 uM but &gt;50% lysis at 100 uM. This Echinus esculentus (Sea urchin) protein is Centrocin 2.